Reading from the N-terminus, the 332-residue chain is Ketol-acid reductoisomerase (NADP(+)) (332 aa).

The KARI N-terminal Rossmann domain maps to 1–182; the sequence is MAQVWKDAEI…GSARAGLIKT (182 aa). NADP(+) is bound by residues 25 to 28, Lys48, Ser53, and 83 to 86; these read YGIQ and DMIQ. Residue His108 is part of the active site. Gly134 contacts NADP(+). In terms of domain architecture, KARI C-terminal knotted spans 183–329; the sequence is TFKEEVETDW…RKMRKMMWPD (147 aa). Mg(2+)-binding residues include Asp191, Glu195, Glu227, and Glu231. A substrate-binding site is contributed by Ser252.

Belongs to the ketol-acid reductoisomerase family. It depends on Mg(2+) as a cofactor.

It catalyses the reaction (2R)-2,3-dihydroxy-3-methylbutanoate + NADP(+) = (2S)-2-acetolactate + NADPH + H(+). It carries out the reaction (2R,3R)-2,3-dihydroxy-3-methylpentanoate + NADP(+) = (S)-2-ethyl-2-hydroxy-3-oxobutanoate + NADPH + H(+). It functions in the pathway amino-acid biosynthesis; L-isoleucine biosynthesis; L-isoleucine from 2-oxobutanoate: step 2/4. Its pathway is amino-acid biosynthesis; L-valine biosynthesis; L-valine from pyruvate: step 2/4. Its function is as follows. Involved in the biosynthesis of branched-chain amino acids (BCAA). Catalyzes an alkyl-migration followed by a ketol-acid reduction of (S)-2-acetolactate (S2AL) to yield (R)-2,3-dihydroxy-isovalerate. In the isomerase reaction, S2AL is rearranged via a Mg-dependent methyl migration to produce 3-hydroxy-3-methyl-2-ketobutyrate (HMKB). In the reductase reaction, this 2-ketoacid undergoes a metal-dependent reduction by NADPH to yield (R)-2,3-dihydroxy-isovalerate. The sequence is that of Ketol-acid reductoisomerase (NADP(+)) from Cenarchaeum symbiosum (strain A).